The primary structure comprises 440 residues: 23S rRNA (uracil(1939)-C(5))-methyltransferase RlmD (440 aa).

The TRAM domain occupies 11–69 (STLDTKHQPVTIERLDHQGSGLAFLHKKPLFVDGALPGEEVLIQLTENKSKYARGQLIK). The [4Fe-4S] cluster site is built by cysteine 82, cysteine 88, cysteine 91, and cysteine 169. Residues glutamine 272, phenylalanine 301, asparagine 306, glutamate 322, asparagine 349, and aspartate 370 each coordinate S-adenosyl-L-methionine. The Nucleophile role is filled by cysteine 396.

Belongs to the class I-like SAM-binding methyltransferase superfamily. RNA M5U methyltransferase family. RlmD subfamily.

The enzyme catalyses uridine(1939) in 23S rRNA + S-adenosyl-L-methionine = 5-methyluridine(1939) in 23S rRNA + S-adenosyl-L-homocysteine + H(+). Functionally, catalyzes the formation of 5-methyl-uridine at position 1939 (m5U1939) in 23S rRNA. The sequence is that of 23S rRNA (uracil(1939)-C(5))-methyltransferase RlmD from Vibrio cholerae serotype O1 (strain M66-2).